The primary structure comprises 369 residues: UDP-glucose 4-epimerase 4 (369 aa).

19–50 (TVLVTGGAGYIGSHTVLQLLAAGFRVVVADSL) is an NAD(+) binding site. Serine 144 is a substrate binding site. The Proton acceptor role is filled by tyrosine 168.

This sequence belongs to the NAD(P)-dependent epimerase/dehydratase family. NAD(+) serves as cofactor.

The catalysed reaction is UDP-alpha-D-glucose = UDP-alpha-D-galactose. The protein operates within carbohydrate metabolism; galactose metabolism. In terms of biological role, catalyzes the interconversion between UDP-glucose and UDP-galactose. The protein is UDP-glucose 4-epimerase 4 (UGE-4) of Oryza sativa subsp. japonica (Rice).